Consider the following 88-residue polypeptide: Putative defensin-like protein 264 (88 aa).

The N-terminal stretch at 1–26 (MEKMVLRKVVLLAILLSLSCLWVAKA) is a signal peptide. Intrachain disulfides connect cysteine 47-cysteine 65, cysteine 53-cysteine 70, and cysteine 57-cysteine 72.

It belongs to the DEFL family.

The protein localises to the secreted. In Arabidopsis thaliana (Mouse-ear cress), this protein is Putative defensin-like protein 264.